A 1798-amino-acid polypeptide reads, in one-letter code: MSDDIKKRFDFPNSLIQSQAVGHLIAAVLKEHGVSEKIHQSTNQTAALNLLWEKCCSDHVVVRTACSEGLVALVAQGHAEFSYVLNGILNLTPSARNMSGLIKALMKLLQMQALREGQSGEKDIQDIYSIRNPPQPLITVLEHRPDCWPLLLQQLTAFFQQCPERSEASCVQIMAPFLWYLYCEPSQLEEYAKLRLSLLKVLLQPRGVCEEAQLSVREQSTLQLCCSMLPCLQMKDLMQTTEMMLFVEEVYLSLLRHPGFWKSQLTQLTLQLLCICEVSLKITGECSSLIHLLERSVELLGEDFPVELVIIGIALLLLQMPASQQKPLLNLALKLLSLTEGQKIPKASLLLLVPLLQILSSTALEDCLAMGEEGPSRQQLALSLVEVLQKERHGDDSHTISCRLAFPVSSMYGSIFTAWRILDVIGEESATSDWLATVESLLSATTVIPPHVFLLLAYLLVEDVGQNLQQILRVTTQLAQADSSQVPNLIPVLMFKLGRPLDPVSYNHILYTLPTLGVHKVCVGQILRVIQLLGTTPRLRAVTLRLLTSLWEKQDRVYPELQRFMAVSDAPSLSVGKELQWEKLIAKAASIRDICKQRPYQHGADMLAAISQVLNECTKPDQATPAALVLQGLHALCQAEVVCIRSTWNALSPKLSCDMRPLILKTLSELFSLVPSLTVNTVEYENFKVQVLSFLWTHTQNKNPTVASAAYKSLSHFSAGEHTILHLPEKIRPEMPVPGELDEEESVDLSIPGACFLRLLTITAPSVLPALEEFFTSLVRQEMVNMPRGIYHSALKGGVRSDQGKTVAGIPNFILKTYETNKQPGLKPGLAGGMLFCYDLAMYQSKDGKPLNRLMASRGRSFKQTTLALIHEVHVQLSEWHRAIFLPQAWLAYMTRAYHAILQGRIAELELQLQHGKEGPEEVQYKRSTAWLWVRDMLTDEITKTAAKESPVVKANALLALSSLAVVVSKHEASLCSDSDGVLEIQPNFLPVKEWVSMVLNTLLVIVDSHYHPSGQLFTCFYHKSYSGENTASAIARSAAATALSLLVPVFIISCKEKVEEILNMLTARLPGKPSADESQAVQIHMGLALGMFLSRLCEEKLSDMSGQQMNLLLMKSLDALESCCFDPSLEYNTGCILGVGLALSLMSHSSHTESRVHVAASLRKLSTYLDESGSQSRTFQEVLVYTLSCVCTSAFSAGIIEAAEAEDIMSKLQLLVENNQQTSGFALALGNLVYGLSVCGHGKAEDLGNRLRPSWIKVVLTEGAPTMLCLAALHGLVALVGSDVDVMQLKSEAIQNTHFQARLNEVIRTLTEVISVSGVIGLQSNAIWLLGHLHLSTLSSNQSRTSVPTDYSYLPEGSFIRAAIGFFITGGKKGPEAVPPSLLKVVMKPIATVGESYQYPPANLAALLSPLMRLNFGEEIQQLCLEIAVTQAPSSQSAASLLGLWVMPPLIHGLSLNIKKYLLVSMPLWAKHVSDEQIQGFVENLMVEVFKTASQPCHPEMCLSALQGLSQAMKLPSPSHHLWSLLCDATGRIFDLLPNRIRRNDLELYISIAKCLSEMTDEGVNQVSQITKDNIEKAAFVKLYLVSQGRLPLMSLTDLLTAAMQHPEKETLAWMILHSLYQARIVNHANTGVLKRLEWLLELMGYVRNIAYQSAPIQNVAPEEALDFLMLIFAAAVVAWADHEAPLLLGLSASWLPWHQQNGPGGPAAALLGRSPMHRVTVQEVLTQLPRSMLLLLQKEPWKEQTQKFIDWLLSIMEIPNKAFAAKSKDLLKATLLSLRVLPEFKKKAVWTRAYGW.

Residue Lys816 is modified to N6-acetyllysine.

As to quaternary structure, interacts with VCL. In terms of tissue distribution, expressed by glial and neuronal cells in brain.

The protein localises to the cell junction. The protein resides in the focal adhesion. Its subcellular location is the cytoplasm. It is found in the cytosol. Its function is as follows. Required for the maintenance of SKIC2 and SKIC3 proteostatic levels in the liver. May be involved in the regulation of RNA degradation by the exosome complex. Potential tumor suppressor in gliomas. The protein is Focadhesin (Focad) of Mus musculus (Mouse).